The primary structure comprises 168 residues: Ribosome maturation factor RimM (168 aa).

The PRC barrel domain occupies 95–168 (KEGYYWSDLI…QIMVDWELDY (74 aa)).

This sequence belongs to the RimM family. In terms of assembly, binds ribosomal protein uS19.

The protein localises to the cytoplasm. An accessory protein needed during the final step in the assembly of 30S ribosomal subunit, possibly for assembly of the head region. Essential for efficient processing of 16S rRNA. May be needed both before and after RbfA during the maturation of 16S rRNA. It has affinity for free ribosomal 30S subunits but not for 70S ribosomes. In Nitrosomonas eutropha (strain DSM 101675 / C91 / Nm57), this protein is Ribosome maturation factor RimM.